Here is a 242-residue protein sequence, read N- to C-terminus: tRNA pseudouridine synthase A (242 aa).

The Nucleophile role is filled by aspartate 51. Tyrosine 107 contributes to the substrate binding site.

It belongs to the tRNA pseudouridine synthase TruA family. Homodimer.

It carries out the reaction uridine(38/39/40) in tRNA = pseudouridine(38/39/40) in tRNA. In terms of biological role, formation of pseudouridine at positions 38, 39 and 40 in the anticodon stem and loop of transfer RNAs. The sequence is that of tRNA pseudouridine synthase A from Helicobacter pylori (strain G27).